A 193-amino-acid chain; its full sequence is MKLLEERILKDGDVLGENILKVDSFLTHQVDFELMQEIGKVFADKYKEAGITKVVTIEASGIAPAVYAAQALGVPMIFAKKAKNITMTEGILTAEVYSFTKQVTSQVSIVSRFLSNDDTVLIIDDFLANGQAAKGLLEIIGQAGAKVAGIGIVIEKSFQDGRDLLEKTGVPVTSLARIKAFENGRVVFAEADA.

2 residues coordinate xanthine: L20 and T27. A 5-phospho-alpha-D-ribose 1-diphosphate-binding site is contributed by 128-132 (ANGQA). K156 serves as a coordination point for xanthine.

This sequence belongs to the purine/pyrimidine phosphoribosyltransferase family. Xpt subfamily. In terms of assembly, homodimer.

The protein resides in the cytoplasm. The catalysed reaction is XMP + diphosphate = xanthine + 5-phospho-alpha-D-ribose 1-diphosphate. The protein operates within purine metabolism; XMP biosynthesis via salvage pathway; XMP from xanthine: step 1/1. Converts the preformed base xanthine, a product of nucleic acid breakdown, to xanthosine 5'-monophosphate (XMP), so it can be reused for RNA or DNA synthesis. The sequence is that of Xanthine phosphoribosyltransferase from Streptococcus agalactiae serotype Ia (strain ATCC 27591 / A909 / CDC SS700).